Here is a 503-residue protein sequence, read N- to C-terminus: Probable cytosol aminopeptidase (503 aa).

Mn(2+) contacts are provided by Lys-270 and Asp-275. Residue Lys-282 is part of the active site. Mn(2+) is bound by residues Asp-293, Asp-352, and Glu-354. Arg-356 is a catalytic residue.

Belongs to the peptidase M17 family. Mn(2+) serves as cofactor.

The protein localises to the cytoplasm. It catalyses the reaction Release of an N-terminal amino acid, Xaa-|-Yaa-, in which Xaa is preferably Leu, but may be other amino acids including Pro although not Arg or Lys, and Yaa may be Pro. Amino acid amides and methyl esters are also readily hydrolyzed, but rates on arylamides are exceedingly low.. The catalysed reaction is Release of an N-terminal amino acid, preferentially leucine, but not glutamic or aspartic acids.. Presumably involved in the processing and regular turnover of intracellular proteins. Catalyzes the removal of unsubstituted N-terminal amino acids from various peptides. The protein is Probable cytosol aminopeptidase of Yersinia enterocolitica serotype O:8 / biotype 1B (strain NCTC 13174 / 8081).